The chain runs to 3672 residues: Laminin-like protein epi-1 (3672 aa).

The signal sequence occupies residues 1-27; it reads MSPYDSSPWATKALFLIVTLLAQFTYS. Positions 28-297 constitute a Laminin N-terminal domain; it reads QVLTPSQITI…AIKEIMIGGR (270 aa). N-linked (GlcNAc...) asparagine glycans are attached at residues asparagine 121, asparagine 140, and asparagine 249. 43 cysteine pairs are disulfide-bonded: cysteine 298–cysteine 307, cysteine 300–cysteine 320, cysteine 322–cysteine 331, cysteine 334–cysteine 354, cysteine 357–cysteine 366, cysteine 359–cysteine 391, cysteine 394–cysteine 403, cysteine 406–cysteine 424, cysteine 427–cysteine 438, cysteine 429–cysteine 445, cysteine 447–cysteine 456, cysteine 459–cysteine 469, cysteine 472–cysteine 484, cysteine 474–cysteine 491, cysteine 493–cysteine 502, cysteine 505–cysteine 516, cysteine 519–cysteine 531, cysteine 521–cysteine 538, cysteine 540–cysteine 549, cysteine 552–cysteine 561, cysteine 564–cysteine 576, cysteine 566–cysteine 583, cysteine 585–cysteine 594, cysteine 597–cysteine 607, cysteine 610–cysteine 622, cysteine 612–cysteine 629, cysteine 631–cysteine 640, cysteine 643–cysteine 653, cysteine 656–cysteine 668, cysteine 658–cysteine 674, cysteine 676–cysteine 685, cysteine 688–cysteine 698, cysteine 701–cysteine 715, cysteine 703–cysteine 724, cysteine 726–cysteine 735, cysteine 738–cysteine 753, cysteine 756–cysteine 770, cysteine 758–cysteine 777, cysteine 779–cysteine 788, cysteine 791–cysteine 806, cysteine 809–cysteine 821, cysteine 811–cysteine 828, and cysteine 830–cysteine 839. 10 consecutive Laminin EGF-like domains span residues 298–356, 357–426, 427–471, 472–518, 519–563, 564–609, 610–655, 656–700, 701–755, and 756–808; these read CVCN…TCEA, CNCF…PCKV, CDCD…KCKP, CECN…GCVE, CVCD…DCKF, CNCD…NCKA, CACD…DCRG, CECL…ICEE, CNCN…GCRS, and CDCN…GCES. N-linked (GlcNAc...) asparagine glycosylation is present at asparagine 351. Residue asparagine 477 is glycosylated (N-linked (GlcNAc...) asparagine). N-linked (GlcNAc...) asparagine glycans are attached at residues asparagine 511 and asparagine 530. A glycan (N-linked (GlcNAc...) asparagine) is linked at asparagine 634. An N-linked (GlcNAc...) asparagine glycan is attached at asparagine 761. Residues 809-839 form the Laminin EGF-like 11; truncated domain; it reads CHCDIGGALRAECDITSGQCKCRPRVTGLRC. Asparagine 1014 and asparagine 1341 each carry an N-linked (GlcNAc...) asparagine glycan. 16 disulfide bridges follow: cysteine 1415–cysteine 1427, cysteine 1417–cysteine 1434, cysteine 1436–cysteine 1445, cysteine 1448–cysteine 1458, cysteine 1461–cysteine 1469, cysteine 1463–cysteine 1476, cysteine 1478–cysteine 1487, cysteine 1490–cysteine 1503, cysteine 1506–cysteine 1520, cysteine 1508–cysteine 1527, cysteine 1529–cysteine 1538, cysteine 1541–cysteine 1551, cysteine 1554–cysteine 1566, cysteine 1556–cysteine 1573, cysteine 1575–cysteine 1584, and cysteine 1587–cysteine 1602. Laminin EGF-like domains lie at 1415-1460, 1461-1505, 1506-1553, and 1554-1604; these read CDCV…ECIK, CQCN…GCQK, CGCH…HCYG, and CSCN…GCVN. The Laminin EGF-like 16; first part domain occupies 1605–1614; it reads CFCFGVTDSC. A Laminin IV type A domain is found at 1615–1796; sequence RSSMYPVTIM…SVIKASSVEQ (182 aa). Residues asparagine 1705 and asparagine 1756 are each glycosylated (N-linked (GlcNAc...) asparagine). Residues 1797–1829 enclose the Laminin EGF-like 16; second part domain; sequence CQCPAPYTGPSCQLCASGYHRVQSGSFLGACVP. 24 disulfide bridges follow: cysteine 1830–cysteine 1839, cysteine 1832–cysteine 1846, cysteine 1849–cysteine 1858, cysteine 1861–cysteine 1877, cysteine 1880–cysteine 1894, cysteine 1882–cysteine 1905, cysteine 1907–cysteine 1916, cysteine 1919–cysteine 1934, cysteine 1937–cysteine 1951, cysteine 1939–cysteine 1958, cysteine 1961–cysteine 1970, cysteine 1973–cysteine 1987, cysteine 1990–cysteine 2000, cysteine 1992–cysteine 2007, cysteine 2009–cysteine 2018, cysteine 2021–cysteine 2031, cysteine 2037–cysteine 2048, cysteine 2039–cysteine 2055, cysteine 2057–cysteine 2066, cysteine 2069–cysteine 2081, cysteine 2084–cysteine 2096, cysteine 2086–cysteine 2103, cysteine 2105–cysteine 2114, and cysteine 2117–cysteine 2129. Laminin EGF-like domains are found at residues 1830-1879, 1880-1936, 1937-1989, 1990-2036, 2037-2083, and 2084-2131; these read CECN…DCMA, CACP…SCSP, CQCN…NCSS, CECS…GCQG, CHCG…GCDK, and CDCE…GCRR. An N-linked (GlcNAc...) asparagine glycan is attached at asparagine 1868. Asparagine 1944 carries N-linked (GlcNAc...) asparagine glycosylation. N-linked (GlcNAc...) asparagine glycosylation is present at asparagine 1986. An N-linked (GlcNAc...) asparagine glycan is attached at asparagine 2002. Residues asparagine 2159, asparagine 2207, asparagine 2231, asparagine 2235, asparagine 2401, asparagine 2421, asparagine 2487, and asparagine 2821 are each glycosylated (N-linked (GlcNAc...) asparagine). 3 Laminin G-like domains span residues 2693 to 2884, 2896 to 3066, and 3072 to 3235; these read GAHF…VNGA, ELVV…RSGC, and RTVS…LNGC. Cysteine 3040 and cysteine 3066 are joined by a disulfide. An N-linked (GlcNAc...) asparagine glycan is attached at asparagine 3087. Residues cysteine 3209 and cysteine 3235 are joined by a disulfide bond. Residues 3236-3294 are disordered; sequence SLSDDENISTTTTAAPKPTDDSDVAVLPIDEEEESTTTTTTTTTEEPTEEPAEARPDGH. A glycan (N-linked (GlcNAc...) asparagine) is linked at asparagine 3242. Positions 3271 to 3280 are enriched in low complexity; it reads TTTTTTTTTE. Laminin G-like domains follow at residues 3310–3482 and 3488–3669; these read GFNF…TEQC and PGMY…RNAC. Cysteine 3460 and cysteine 3482 form a disulfide bridge. Asparagine 3541 carries an N-linked (GlcNAc...) asparagine glycan. Cysteine 3633 and cysteine 3669 are joined by a disulfide.

As to quaternary structure, laminin is a complex glycoprotein, consisting of three different polypeptide chains (alpha, beta, gamma), which are bound to each other by disulfide bonds into a cross-shaped molecule comprising one long and three short arms with globules at each end.

The protein resides in the secreted. Its subcellular location is the extracellular space. It localises to the extracellular matrix. It is found in the basement membrane. In terms of biological role, binding to cells via a high affinity receptor, laminin is thought to mediate the attachment, migration and organization of cells into tissues during embryonic development by interacting with other extracellular matrix components. Required to assemble a stable basement membrane and for organizing receptor complexes and cytoskeletal components to the proper cell surfaces. During embryogenesis, does not require the presence of collagen type IV in order to associate with cell surfaces, prior to assembly of the prototypical basement membrane. During the formation of neuromuscular junctions at the larval stage, negatively regulates membrane protrusion from body wall muscles, probably downstream of the integrin complex formed by pat-2 and pat-3. Probably plays a distinct role from the related laminin subunit alpha lam-3. The sequence is that of Laminin-like protein epi-1 (epi-1) from Caenorhabditis elegans.